The sequence spans 469 residues: Threonine synthase (469 aa).

Residue K112 is modified to N6-(pyridoxal phosphate)lysine.

Belongs to the threonine synthase family. Pyridoxal 5'-phosphate serves as cofactor.

It carries out the reaction O-phospho-L-homoserine + H2O = L-threonine + phosphate. It functions in the pathway amino-acid biosynthesis; L-threonine biosynthesis; L-threonine from L-aspartate: step 5/5. Its function is as follows. Catalyzes the gamma-elimination of phosphate from L-phosphohomoserine and the beta-addition of water to produce L-threonine. This chain is Threonine synthase (thrC), found in Pseudomonas aeruginosa (strain ATCC 15692 / DSM 22644 / CIP 104116 / JCM 14847 / LMG 12228 / 1C / PRS 101 / PAO1).